A 511-amino-acid polypeptide reads, in one-letter code: 2-methylbutanal oxime monooxygenase (511 aa).

Transmembrane regions (helical) follow at residues 10-30 (PPQWLSILAVFLLPILTLLLF) and 304-324 (ILMNVFVGGIDTSAVTITWAF). C451 provides a ligand contact to heme.

This sequence belongs to the cytochrome P450 family. Requires heme as cofactor. In terms of tissue distribution, expressed in storage roots, primary roots, petioles and vascular tissues. Expressed in the outer cortex cells, the endodermis and around the xylem, phloem cells and laticifers.

It is found in the microsome membrane. The catalysed reaction is (1E,2S)-2-methylbutanal oxime + reduced [NADPH--hemoprotein reductase] + O2 = 2-hydroxy-2-methylbutanenitrile + oxidized [NADPH--hemoprotein reductase] + 2 H2O + H(+). It catalyses the reaction (E)-2-methylpropanal oxime + reduced [NADPH--hemoprotein reductase] + O2 = 2-hydroxy-2-methylpropanenitrile + oxidized [NADPH--hemoprotein reductase] + 2 H2O + H(+). Catalyzes the conversion of (E)-2-methylpropanal oxime (valox) to 2-hydroxy-2-methylpropanenitrile (acetone cyanohydrin) and of (E)-2-methylbutanal oxime (ilox) to 2-hydroxy-2-methylbutyronitrile. The reaction takes place in three steps. First, the oxime is isomerized to the (Z)- isomer, next the (Z)-isomer is dehydrated to the corresponding nitrile, followed by a C-hydroxylation of the nitrile. Can use both aliphatic and aromatic oximes as substrates. In Manihot esculenta (Cassava), this protein is 2-methylbutanal oxime monooxygenase (CYP71E7).